The following is a 146-amino-acid chain: Large ribosomal subunit protein uL15 (146 aa).

A disordered region spans residues 1–52 (MKLSNLSPKAGSKKRRRRVGRGIAAGQGASCGFGMRGQKSRSGTGTKAGFEG). A compositionally biased stretch (basic residues) spans 11–20 (GSKKRRRRVG). Positions 23 to 35 (IAAGQGASCGFGM) are enriched in gly residues.

The protein belongs to the universal ribosomal protein uL15 family. Part of the 50S ribosomal subunit.

Functionally, binds to the 23S rRNA. In Picosynechococcus sp. (strain ATCC 27264 / PCC 7002 / PR-6) (Agmenellum quadruplicatum), this protein is Large ribosomal subunit protein uL15.